Here is a 440-residue protein sequence, read N- to C-terminus: Argininosuccinate lyase (440 aa).

This sequence belongs to the lyase 1 family. Argininosuccinate lyase subfamily.

It is found in the cytoplasm. It catalyses the reaction 2-(N(omega)-L-arginino)succinate = fumarate + L-arginine. It functions in the pathway amino-acid biosynthesis; L-arginine biosynthesis; L-arginine from L-ornithine and carbamoyl phosphate: step 3/3. This is Argininosuccinate lyase from Clostridium botulinum (strain Okra / Type B1).